We begin with the raw amino-acid sequence, 685 residues long: Stromal interaction molecule 1 (685 aa).

The signal sequence occupies residues 1–22 (MDVCARLALWLLWGLLLHQGQS). Topologically, residues 23 to 213 (LSHSHSEKNT…LLTRHNHLKD (191 aa)) are extracellular. A disordered region spans residues 24–43 (SHSHSEKNTGASSGATSEES). Positions 32–41 (TGASSGATSE) are enriched in low complexity. EF-hand domains are found at residues 64–97 (SFEAVRNIHKLMDDDANGDVDVEESDEFLREDLN) and 102–126 (TVKHSTFHGEDKLISVEDLWKAWKA). The Ca(2+) site is built by Asp76, Asp78, Asn80, Asp82, and Glu87. N-linked (GlcNAc...) asparagine glycans are attached at residues Asn131 and Asn171. Residues 132–200 (WTVDEVIQWL…QLKALDTVLF (69 aa)) form the SAM domain. The helical transmembrane segment at 214–234 (FMLVVSIVIGVGGCWFAYIQN) threads the bilayer. Over 235-685 (RYSKEHMKKM…LKIFKKPLKK (451 aa)) the chain is Cytoplasmic. Residues 248–442 (LEGLHRAEQS…IEILCGFQIV (195 aa)) are a coiled coil. Position 257 is a phosphoserine (Ser257). Residues 344–442 (PEALQKWLQL…IEILCGFQIV (99 aa)) are SOAR/CAD. The tract at residues 475–483 (DDVDDMDEE) is contributes to fast Ca(2+)-dependent inactivation of CRAC channels. Low complexity predominate over residues 490 to 499 (MQSPSLQSSV). The segment at 490 to 542 (MQSPSLQSSVRQRLTEPQHGLGSQRDLTHSDSESSLHTSDRQRVAPKPPQMGR) is disordered. Thr504 carries the phosphothreonine modification. The residue at position 512 (Ser512) is a Phosphoserine. Residues 515 to 532 (DLTHSDSESSLHTSDRQR) show a composition bias toward basic and acidic residues. Thr517 is subject to Phosphothreonine. 11 positions are modified to phosphoserine: Ser519, Ser521, Ser523, Ser524, Ser567, Ser575, Ser602, Ser608, Ser618, Ser621, and Ser628. A disordered region spans residues 596-685 (LMELNPSVPP…LKIFKKPLKK (90 aa)). Over residues 608-620 (SPLLDSSHSHSPS) the composition is skewed to low complexity. Residues 642-645 (TRIP) carry the Microtubule tip localization signal motif. Residues 655-666 (EEDNGSIGEETD) are compositionally biased toward acidic residues. Position 660 is a phosphoserine (Ser660). A Phosphothreonine modification is found at Thr665. The residue at position 668 (Ser668) is a Phosphoserine. Residues 670 to 685 (GRKKFPLKIFKKPLKK) show a composition bias toward basic residues. Residues 672–685 (KKFPLKIFKKPLKK) are required for generation of inwardly rectifying CRAC currents.

Monomer in the presence of Ca(2+). It oligomerizes in absence of Ca(2+). Forms homooligomers and heterooligomers with STIM2. Interacts with pore-forming subunits of CRAC channels, ORAI1, ORAI2 and ORAI3; this interaction is potentiated upon Ca(2+) store depletion. Interacts (via the transmembrane region and the SOAR/CAD domain) with SPPL3; the interaction promotes the binding of STIM1 to ORAI1. Interacts with ORAI1. Interacts with MAPRE1; probably required for targeting to the growing microtubule plus ends. Interacts with CRACR2A/EFCAB4B; the interaction is direct and takes place in absence of Ca(2+). Forms a complex with CRACR2A/EFCAB4B and ORAI1 at low concentration of Ca(2+), the complex dissociates at elevated Ca(2+) concentrations. Interacts with SARAF, promoting a slow inactivation of STIM1-dependent SOCE activity, possibly by facilitating the deoligomerization of STIM1. Interacts with EFHB; the interaction takes place upon Ca(2+)-store depletion and inhibits the association with SARAF. Interacts with ASPH. Interacts with SLC35G1; intracellular Ca(2+)-dependent. May interact with ATP1A1, ATP2A2, ATP2B1, ATP2B4, KPNB1 and XPO1; through SLC35G1. Interacts with TMEM203. Interacts with STIMATE, promoting STIM1 conformational switch. Interacts with TMEM178A. Interacts with CASQ1 (via C-terminal end and preferentially with the monomeric form); this interaction increases in response to a depletion of intracellular Ca(2+), decreases both STIM1 aggregation and clustering, interaction of STIM1 with ORAI1 and store-operated Ca(2+) entry (SOCE) activity. Interacts with ADCY8. Glycosylation is required for cell surface expression. In terms of processing, phosphorylated predominantly on Ser residues.

It is found in the cell membrane. The protein resides in the endoplasmic reticulum membrane. The protein localises to the sarcoplasmic reticulum. It localises to the cytoplasm. Its subcellular location is the cytoskeleton. Its function is as follows. Acts as a Ca(2+) sensor that gates two major inward rectifying Ca(2+) channels at the plasma membrane: Ca(2+) release-activated Ca(2+) (CRAC) channels and arachidonate-regulated Ca(2+)-selective (ARC) channels. Plays a role in mediating store-operated Ca(2+) entry (SOCE), a Ca(2+) influx following depletion of intracellular Ca(2+) stores. Upon Ca(2+) depletion, translocates from the endoplasmic reticulum to the plasma membrane where it activates CRAC channel pore-forming subunits ORA1, ORA2 and ORAI3 to generate sustained and oscillatory Ca(2+) entry. Involved in enamel formation. The sequence is that of Stromal interaction molecule 1 from Rattus norvegicus (Rat).